Reading from the N-terminus, the 150-residue chain is Large ribosomal subunit protein uL15 (150 aa).

This sequence belongs to the universal ribosomal protein uL15 family. As to quaternary structure, part of the 50S ribosomal subunit.

Its function is as follows. Binds to the 23S rRNA. This chain is Large ribosomal subunit protein uL15, found in Rickettsia typhi (strain ATCC VR-144 / Wilmington).